The primary structure comprises 232 residues: Ribonuclease 3 (232 aa).

Residues 10-135 enclose the RNase III domain; that stretch reads ALKIYEATGY…LIGAMYMDGG (126 aa). Glutamate 48 contributes to the Mg(2+) binding site. Aspartate 52 is a catalytic residue. Residues asparagine 121 and glutamate 124 each contribute to the Mg(2+) site. The active site involves glutamate 124. Residues 161–230 form the DRBM domain; it reads DPKTALQEWV…AKLMLKKITE (70 aa).

This sequence belongs to the ribonuclease III family. In terms of assembly, homodimer. Requires Mg(2+) as cofactor.

Its subcellular location is the cytoplasm. It carries out the reaction Endonucleolytic cleavage to 5'-phosphomonoester.. Its function is as follows. Digests double-stranded RNA. Involved in the processing of primary rRNA transcript to yield the immediate precursors to the large and small rRNAs (23S and 16S). Processes some mRNAs, and tRNAs when they are encoded in the rRNA operon. Processes pre-crRNA and tracrRNA of type II CRISPR loci if present in the organism. The sequence is that of Ribonuclease 3 from Anaplasma marginale (strain Florida).